Reading from the N-terminus, the 66-residue chain is Large ribosomal subunit protein bL35 (66 aa).

The protein belongs to the bacterial ribosomal protein bL35 family.

The chain is Large ribosomal subunit protein bL35 from Borreliella burgdorferi (strain ATCC 35210 / DSM 4680 / CIP 102532 / B31) (Borrelia burgdorferi).